Here is a 211-residue protein sequence, read N- to C-terminus: Troponin I, cardiac muscle (211 aa).

At A1 the chain carries N-acetylalanine. The segment at 1–43 (ADESRDAAGEARPAPAPVRRRSSANYRAYATEPHAKSKKKISA) is disordered. S4 is modified (phosphoserine). S22 carries the phosphoserine; by PHK, PKA and PKD/PRKD1 modification. Residue S23 is modified to Phosphoserine; by PKA and PKD/PRKD1. Y26 carries the phosphotyrosine modification. The residue at position 31 (T31) is a Phosphothreonine; by STK4/MST1. The segment at 32-79 (EPHAKSKKKISASRKLQLKTLMLQIAKQELEREAEERRGEKGRALSTR) is involved in binding TNC. 2 positions are modified to phosphoserine; by PKC/PRKCE: S42 and S44. Residue T51 is modified to Phosphothreonine; by STK4/MST1. S77 carries the phosphoserine modification. Residue T78 is modified to Phosphothreonine. Phosphothreonine; by STK4/MST1 occurs at positions 129 and 143. The involved in binding TNC and actin stretch occupies residues 129–150 (TQKIFDLRGKFKRPTLRLRVRI). S151 is subject to Phosphoserine; by PAK3. At T182 the chain carries Phosphothreonine. The residue at position 200 (S200) is a Phosphoserine.

It belongs to the troponin I family. As to quaternary structure, interacts with TRIM63. Binds to actin and tropomyosin. Interacts with STK4/MST1. Phosphorylated at Ser-22 and Ser-23 by PRKD1; phosphorylation reduces myofilament calcium sensitivity. Phosphorylated preferentially at Thr-31. Phosphorylation by STK4/MST1 alters its binding affinity to TNNC1 (cardiac Tn-C) and TNNT2 (cardiac Tn-T). Phosphorylated at Ser-42 and Ser-44 by PRKCE; phosphorylation increases myocardium contractile dysfunction. Ser-22 is one of three sites in the region of residues 1-48 that are phosphorylated by phosphorylase kinase.

Functionally, troponin I is the inhibitory subunit of troponin, the thin filament regulatory complex which confers calcium-sensitivity to striated muscle actomyosin ATPase activity. The polypeptide is Troponin I, cardiac muscle (TNNI3) (Oryctolagus cuniculus (Rabbit)).